The chain runs to 343 residues: Olfactory receptor 1E3 (343 aa).

Residues 1–28 (MMKKNQTMISEFLLLGLPIQPEQQNLFY) are Extracellular-facing. Asn5 is a glycosylation site (N-linked (GlcNAc...) asparagine). A helical membrane pass occupies residues 29 to 49 (ALFLAVYLTTLLGNLLVIVLI). Over 50-107 (RLDSHLHMPMYLCLSNLSFSDLCFSSVTMPKLLQNMQSQNPSIPFADCLAQMYFHLFY) the chain is Cytoplasmic. A disulfide bond links Cys97 and Cys179. Residues 108-128 (GVLESFLLVVMAYHCYVAICF) traverse the membrane as a helical segment. Topologically, residues 129–141 (PLHYTTIMSPKCC) are extracellular. A helical membrane pass occupies residues 142–162 (LGLLTLSWLLTTAHATLHTLL). At 163–195 (MARLSFCAENVIPHFFCDTSTLLKLACSNTQVN) the chain is on the cytoplasmic side. A helical membrane pass occupies residues 196–216 (GWVMFFMGGLILVIPFLLLIM). Topologically, residues 217-242 (SCARIVSTILRVPSTGGIQKAFSTCG) are extracellular. Residues 243–263 (PHLSVVSLFYGTIIGLYLCPL) form a helical membrane-spanning segment. Topologically, residues 264 to 271 (TNHNTVKD) are cytoplasmic. Residues 272–292 (TVMAVMYTGVTHMLNPFIYSL) form a helical membrane-spanning segment. Over 293 to 310 (RNRDMRGNPGQSLQHKEN) the chain is Extracellular. The helical transmembrane segment at 311 to 331 (FFVFKIVIVGILPLLNLVGVV) threads the bilayer. Over 332–343 (KLIMKYHSKSVA) the chain is Cytoplasmic.

This sequence belongs to the G-protein coupled receptor 1 family.

It is found in the cell membrane. Its function is as follows. Odorant receptor. This chain is Olfactory receptor 1E3 (OR1E3), found in Homo sapiens (Human).